We begin with the raw amino-acid sequence, 761 residues long: uncharacterized protein (761 aa).

TPR repeat units follow at residues 35–68 (EEGK…SLNS), 69–102 (AQGL…SDVD), 103–136 (DALY…NPNK), 137–170 (VEIL…KPDF), 172–203 (EAEE…KNPN), 204–237 (EEVY…FPHD), 351–384 (LGVL…NPSA), and 419–452 (ASAG…VKEE). Residues 487 to 761 (KRPIFVLGMP…PKGLVGYTVG (275 aa)) form a protein sulfotransferase-like region.

This sequence in the C-terminal section; belongs to the protein sulfotransferase family.

This is an uncharacterized protein from Aquifex aeolicus (strain VF5).